A 348-amino-acid chain; its full sequence is Short-wave-sensitive opsin 1 (348 aa).

Topologically, residues M1–A33 are extracellular. Residue N14 is glycosylated (N-linked (GlcNAc...) asparagine). The chain crosses the membrane as a helical span at residues F34–A58. Residues T59–N70 lie on the Cytoplasmic side of the membrane. Residues Y71–C96 traverse the membrane as a helical segment. At N97–E110 the chain is on the extracellular side. C107 and C184 are oxidised to a cystine. A helical transmembrane segment spans residues G111–F130. Topologically, residues E131–H149 are cytoplasmic. Residues A150 to S173 form a helical membrane-spanning segment. The Extracellular segment spans residues R174–S199. Residues Y200–L227 traverse the membrane as a helical segment. Residues K228 to R249 are Cytoplasmic-facing. Residues M250 to V273 form a helical membrane-spanning segment. The Extracellular segment spans residues N274–D281. The chain crosses the membrane as a helical span at residues L282–M306. Position 293 is an N6-(retinylidene)lysine (K293). The Cytoplasmic segment spans residues N307–N348.

Belongs to the G-protein coupled receptor 1 family. Opsin subfamily. Phosphorylated on some or all of the serine and threonine residues present in the C-terminal region.

The protein localises to the cell membrane. It localises to the photoreceptor inner segment. The protein resides in the cell projection. Its subcellular location is the cilium. It is found in the photoreceptor outer segment. The protein localises to the cytoplasm. It localises to the perinuclear region. Visual pigments are the light-absorbing molecules that mediate vision. They consist of an apoprotein, opsin, covalently linked to cis-retinal. Required for the maintenance of cone outer segment organization in the ventral retina, but not essential for the maintenance of functioning cone photoreceptors. Involved in ensuring correct abundance and localization of retinal membrane proteins. May increase spectral sensitivity in dim light. This is Short-wave-sensitive opsin 1 (OPN1SW) from Pan paniscus (Pygmy chimpanzee).